The primary structure comprises 189 residues: B3 domain-containing protein At2g32645 (189 aa).

The TF-B3 DNA-binding region spans 33–133 (FNQVKTPDFL…KLCFALTPKI (101 aa)).

The protein resides in the nucleus. This is B3 domain-containing protein At2g32645 from Arabidopsis thaliana (Mouse-ear cress).